The following is a 154-amino-acid chain: Transcription antitermination protein NusB (154 aa).

It belongs to the NusB family.

Functionally, involved in transcription antitermination. Required for transcription of ribosomal RNA (rRNA) genes. Binds specifically to the boxA antiterminator sequence of the ribosomal RNA (rrn) operons. This chain is Transcription antitermination protein NusB, found in Enterococcus faecalis (strain ATCC 700802 / V583).